We begin with the raw amino-acid sequence, 271 residues long: Formamidopyrimidine-DNA glycosylase (271 aa).

Pro-2 functions as the Schiff-base intermediate with DNA in the catalytic mechanism. Glu-3 functions as the Proton donor in the catalytic mechanism. Lys-57 acts as the Proton donor; for beta-elimination activity in catalysis. Positions 90, 109, and 151 each coordinate DNA. The segment at 236–270 adopts an FPG-type zinc-finger fold; it reads HVYGRGGESCTQCGNLLSEIKLGQRATVFCGLCQT. Arg-260 functions as the Proton donor; for delta-elimination activity in the catalytic mechanism.

This sequence belongs to the FPG family. Monomer. Requires Zn(2+) as cofactor.

The enzyme catalyses Hydrolysis of DNA containing ring-opened 7-methylguanine residues, releasing 2,6-diamino-4-hydroxy-5-(N-methyl)formamidopyrimidine.. The catalysed reaction is 2'-deoxyribonucleotide-(2'-deoxyribose 5'-phosphate)-2'-deoxyribonucleotide-DNA = a 3'-end 2'-deoxyribonucleotide-(2,3-dehydro-2,3-deoxyribose 5'-phosphate)-DNA + a 5'-end 5'-phospho-2'-deoxyribonucleoside-DNA + H(+). Involved in base excision repair of DNA damaged by oxidation or by mutagenic agents. Acts as a DNA glycosylase that recognizes and removes damaged bases. Has a preference for oxidized purines, such as 7,8-dihydro-8-oxoguanine (8-oxoG). Has AP (apurinic/apyrimidinic) lyase activity and introduces nicks in the DNA strand. Cleaves the DNA backbone by beta-delta elimination to generate a single-strand break at the site of the removed base with both 3'- and 5'-phosphates. The sequence is that of Formamidopyrimidine-DNA glycosylase from Shewanella woodyi (strain ATCC 51908 / MS32).